Consider the following 470-residue polypeptide: 3-isopropylmalate dehydratase large subunit (470 aa).

[4Fe-4S] cluster-binding residues include Cys-347, Cys-407, and Cys-410.

Belongs to the aconitase/IPM isomerase family. LeuC type 1 subfamily. As to quaternary structure, heterodimer of LeuC and LeuD. The cofactor is [4Fe-4S] cluster.

It catalyses the reaction (2R,3S)-3-isopropylmalate = (2S)-2-isopropylmalate. It participates in amino-acid biosynthesis; L-leucine biosynthesis; L-leucine from 3-methyl-2-oxobutanoate: step 2/4. Its function is as follows. Catalyzes the isomerization between 2-isopropylmalate and 3-isopropylmalate, via the formation of 2-isopropylmaleate. The polypeptide is 3-isopropylmalate dehydratase large subunit (Shewanella amazonensis (strain ATCC BAA-1098 / SB2B)).